The chain runs to 140 residues: uncharacterized protein (140 aa).

This is an uncharacterized protein from Acidianus ambivalens (Desulfurolobus ambivalens).